Consider the following 347-residue polypeptide: Methylthioribose-1-phosphate isomerase (347 aa).

Substrate contacts are provided by residues R47 to A49, R90, and Q199. D240 acts as the Proton donor in catalysis. N250–K251 is a binding site for substrate.

Belongs to the eIF-2B alpha/beta/delta subunits family. MtnA subfamily.

The enzyme catalyses 5-(methylsulfanyl)-alpha-D-ribose 1-phosphate = 5-(methylsulfanyl)-D-ribulose 1-phosphate. It functions in the pathway amino-acid biosynthesis; L-methionine biosynthesis via salvage pathway; L-methionine from S-methyl-5-thio-alpha-D-ribose 1-phosphate: step 1/6. Functionally, catalyzes the interconversion of methylthioribose-1-phosphate (MTR-1-P) into methylthioribulose-1-phosphate (MTRu-1-P). This is Methylthioribose-1-phosphate isomerase from Natranaerobius thermophilus (strain ATCC BAA-1301 / DSM 18059 / JW/NM-WN-LF).